The following is a 266-amino-acid chain: 22 kDa alpha-zein 14 (266 aa).

The N-terminal stretch at 1–21 is a signal peptide; sequence MATKILSLLALLALFASATNA.

It belongs to the zein family.

Functionally, zeins are major seed storage proteins. The protein is 22 kDa alpha-zein 14 of Zea mays (Maize).